The sequence spans 178 residues: Inorganic pyrophosphatase (178 aa).

Residues Lys-30, Arg-44, and Tyr-56 each contribute to the substrate site. Residues Asp-66, Asp-71, and Asp-103 each contribute to the Mg(2+) site. Tyr-140 provides a ligand contact to substrate.

This sequence belongs to the PPase family. In terms of assembly, homohexamer. Mg(2+) is required as a cofactor.

It is found in the cytoplasm. The catalysed reaction is diphosphate + H2O = 2 phosphate + H(+). Catalyzes the hydrolysis of inorganic pyrophosphate (PPi) forming two phosphate ions. In Thermococcus kodakarensis (strain ATCC BAA-918 / JCM 12380 / KOD1) (Pyrococcus kodakaraensis (strain KOD1)), this protein is Inorganic pyrophosphatase.